Reading from the N-terminus, the 124-residue chain is uncharacterized protein (124 aa).

The region spanning 42-118 (DKGGIFMFYN…INTQHSKYNI (77 aa)) is the GIY-YIG domain.

This is an uncharacterized protein from Bacillus subtilis (strain 168).